Reading from the N-terminus, the 295-residue chain is Indole-3-glycerol phosphate synthase (295 aa).

This sequence belongs to the TrpC family.

It carries out the reaction 1-(2-carboxyphenylamino)-1-deoxy-D-ribulose 5-phosphate + H(+) = (1S,2R)-1-C-(indol-3-yl)glycerol 3-phosphate + CO2 + H2O. The protein operates within amino-acid biosynthesis; L-tryptophan biosynthesis; L-tryptophan from chorismate: step 4/5. The protein is Indole-3-glycerol phosphate synthase of Prochlorococcus marinus (strain MIT 9215).